A 276-amino-acid chain; its full sequence is Adenylate kinase (276 aa).

50–55 (GAGKGT) lines the ATP pocket. Residues 70-99 (ATGDMLRSQVAKKTPLGREAKKIMDQGGLV) are NMP. Residues Thr71, Arg76, 97 to 99 (GLV), 126 to 129 (GFPR), and Gln133 each bind AMP. The LID stretch occupies residues 167 to 204 (GRLVHPASGRSYHTTFNPPKKAMTDDVTGEPLIQRSDD). ATP-binding positions include Arg168 and 177–178 (SY). Residues Arg201 and Arg212 each coordinate AMP. Residue Gln240 coordinates ATP.

Belongs to the adenylate kinase family. AK2 subfamily. In terms of assembly, monomer.

It localises to the cytoplasm. Its subcellular location is the cytosol. The protein resides in the mitochondrion intermembrane space. The catalysed reaction is AMP + ATP = 2 ADP. In terms of biological role, catalyzes the reversible transfer of the terminal phosphate group between ATP and AMP. Plays an important role in cellular energy homeostasis and in adenine nucleotide metabolism. Adenylate kinase activity is critical for regulation of the phosphate utilization and the AMP de novo biosynthesis pathways. The chain is Adenylate kinase from Pyricularia oryzae (strain 70-15 / ATCC MYA-4617 / FGSC 8958) (Rice blast fungus).